The following is a 962-amino-acid chain: MASTTVAQLAAELSRSAAALLEQLQAAGVGKATPEDIITESDKTRLLDYLKRSHGQADDSSRKKITLTKRETSEIRQSDGTGKTRTVQVEVRKKRVLIKRDEAAPDAQADAVEAQAPVVDAVEEARRDEEERQQAELLARQEAEAKAAREAAEREEAERRARQEALEAEQRRQAELAARKAEEEAAASRAVTEANEDSSRKKAEDEKARVTAERAEAQKAADEAKAAADKARAEQEVAARKRREAAEAEARAIQQMLNAPPRVLKAPSERKAEEKKAEQTGTLHKPVKPAGATTEAKKDEKKPATTTTTTATADKKGKVVKAGWQDDSSRKKGSGLKTRGDTSGGVGGWRGGPRGRGGRQQQHDDSRSSFQAPTEPVVREVHVPETVSVADLAHKMAVKASEVIKQMMKLGQMVTINQVLDQETAMIVVEEMGHKAYAAKLDDPEALLVVGGEEHTDAELLPRPPVVTVMGHVDHGKTSLLDYIRRTKVAAGEAGGITQHIGAYHVETDRGVITFLDTPGHEAFTAMRARGAKATDIVILVVAADDGVMPQTKEAIAHAKAAGVPIVVAINKIDKPDANPDRVKQELVAEQVVPEEYGGDSPFVPVSAKMGTGVEDLLEQVLLQAEVLELTAPVDAPAKGLVVEAQLDKGKGPIATILVSSGTLKRGDVVLAGSAYGRVRAMLDENGKPTKEAGPSIPVEIQGLSEVPAAGEEVLVLPDERKAREIALFRQGKFRDVKLAKQQAAKLENMLEQMAEGEVQTLPLIVKADVQGSQEALVQSLQKLSTAEVRVQIVHGGVGGISESDVNLATASKAVIIGFNVRADAGARKLAEHNGIDIRYYNIIYDAVDEIKAAMSGMLAPEKRETTIGQVEVRQVFRVPKIGAVAGCMVTDGLVKRNSLVRVLRNNVVIHDGELDSLKRFKDDVKEVKQGFECGLSIKNFNDVQEGDQLEVYEITEVARTL.

The segment covering 52-77 (RSHGQADDSSRKKITLTKRETSEIRQ) has biased composition (basic and acidic residues). Disordered stretches follow at residues 52 to 87 (RSHG…TRTV) and 121 to 378 (AVEE…EPVV). A compositionally biased stretch (polar residues) spans 78 to 87 (SDGTGKTRTV). Basic and acidic residues-rich tracts occupy residues 123–183 (EEAR…KAEE), 197–250 (DSSR…EAEA), and 267–278 (PSERKAEEKKAE). The span at 342–355 (TSGGVGGWRGGPRG) shows a compositional bias: gly residues. One can recognise a tr-type G domain in the interval 462–631 (PRPPVVTVMG…LLQAEVLELT (170 aa)). A G1 region spans residues 471–478 (GHVDHGKT). 471–478 (GHVDHGKT) is a binding site for GTP. The segment at 496-500 (GITQH) is G2. Residues 517-520 (DTPG) are G3. GTP is bound by residues 517–521 (DTPGH) and 571–574 (NKID). The G4 stretch occupies residues 571-574 (NKID). Positions 607-609 (SAK) are G5.

Belongs to the TRAFAC class translation factor GTPase superfamily. Classic translation factor GTPase family. IF-2 subfamily.

The protein resides in the cytoplasm. Functionally, one of the essential components for the initiation of protein synthesis. Protects formylmethionyl-tRNA from spontaneous hydrolysis and promotes its binding to the 30S ribosomal subunits. Also involved in the hydrolysis of GTP during the formation of the 70S ribosomal complex. The chain is Translation initiation factor IF-2 from Cupriavidus necator (strain ATCC 17699 / DSM 428 / KCTC 22496 / NCIMB 10442 / H16 / Stanier 337) (Ralstonia eutropha).